The primary structure comprises 216 residues: MASGAPPSVDLTSIQWRMPEWVQSMGGLRTENVLEYFSQSPFYSHKSNNEMLKMQSQFNALDLGDLNSQLKRLTGIQFVIIHERPPFLWVIQKQNRLNENEVKPLTVYFVCNENIYMAPNAYTLLATRMLNATYCFQKALTKIEKFPQYNPQEGYTYPKLSNDNLEVDHSNTNEPADENKNQSIENADYSFSPEDFSVVRAFMQSLHSSKEAPDVK.

The interval 157 to 187 (YPKLSNDNLEVDHSNTNEPADENKNQSIENA) is disordered.

Belongs to the Mediator complex subunit 6 family. As to quaternary structure, component of the Mediator complex.

Its subcellular location is the nucleus. Its function is as follows. Component of the Mediator complex, a coactivator involved in the regulated transcription of nearly all RNA polymerase II-dependent genes. Mediator functions as a bridge to convey information from gene-specific regulatory proteins to the basal RNA polymerase II transcription machinery. Mediator is recruited to promoters by direct interactions with regulatory proteins and serves as a scaffold for the assembly of a functional preinitiation complex with RNA polymerase II and the general transcription factors. This is Mediator of RNA polymerase II transcription subunit 6 (med6) from Schizosaccharomyces pombe (strain 972 / ATCC 24843) (Fission yeast).